A 202-amino-acid polypeptide reads, in one-letter code: Protein GrpE (202 aa).

Positions 1–14 (MENTQENPTSQNPT) are enriched in polar residues. The segment at 1–58 (MENTQENPTSQNPTPADEAARQAAEAASGEPQDQARQPAAAAGEQPAQAQPAGAEAAL) is disordered. A compositionally biased stretch (low complexity) spans 21 to 58 (RQAAEAASGEPQDQARQPAAAAGEQPAQAQPAGAEAAL).

Belongs to the GrpE family. In terms of assembly, homodimer.

Its subcellular location is the cytoplasm. Its function is as follows. Participates actively in the response to hyperosmotic and heat shock by preventing the aggregation of stress-denatured proteins, in association with DnaK and GrpE. It is the nucleotide exchange factor for DnaK and may function as a thermosensor. Unfolded proteins bind initially to DnaJ; upon interaction with the DnaJ-bound protein, DnaK hydrolyzes its bound ATP, resulting in the formation of a stable complex. GrpE releases ADP from DnaK; ATP binding to DnaK triggers the release of the substrate protein, thus completing the reaction cycle. Several rounds of ATP-dependent interactions between DnaJ, DnaK and GrpE are required for fully efficient folding. In Paraburkholderia phymatum (strain DSM 17167 / CIP 108236 / LMG 21445 / STM815) (Burkholderia phymatum), this protein is Protein GrpE.